A 306-amino-acid polypeptide reads, in one-letter code: Aspartate carbamoyltransferase catalytic subunit (306 aa).

Positions 51 and 52 each coordinate carbamoyl phosphate. An L-aspartate-binding site is contributed by Lys-79. Carbamoyl phosphate contacts are provided by Arg-101, His-130, and Gln-133. L-aspartate contacts are provided by Arg-163 and Arg-215. Carbamoyl phosphate is bound by residues Gly-256 and Pro-257.

It belongs to the aspartate/ornithine carbamoyltransferase superfamily. ATCase family. In terms of assembly, heterododecamer (2C3:3R2) of six catalytic PyrB chains organized as two trimers (C3), and six regulatory PyrI chains organized as three dimers (R2).

The enzyme catalyses carbamoyl phosphate + L-aspartate = N-carbamoyl-L-aspartate + phosphate + H(+). It participates in pyrimidine metabolism; UMP biosynthesis via de novo pathway; (S)-dihydroorotate from bicarbonate: step 2/3. Functionally, catalyzes the condensation of carbamoyl phosphate and aspartate to form carbamoyl aspartate and inorganic phosphate, the committed step in the de novo pyrimidine nucleotide biosynthesis pathway. The protein is Aspartate carbamoyltransferase catalytic subunit of Ehrlichia ruminantium (strain Welgevonden).